Reading from the N-terminus, the 242-residue chain is Biosynthetic peptidoglycan transglycosylase (242 aa).

A helical transmembrane segment spans residues 12–32 (LLLWLIALSVLLVLLLRWVPP).

Belongs to the glycosyltransferase 51 family.

It is found in the cell inner membrane. It carries out the reaction [GlcNAc-(1-&gt;4)-Mur2Ac(oyl-L-Ala-gamma-D-Glu-L-Lys-D-Ala-D-Ala)](n)-di-trans,octa-cis-undecaprenyl diphosphate + beta-D-GlcNAc-(1-&gt;4)-Mur2Ac(oyl-L-Ala-gamma-D-Glu-L-Lys-D-Ala-D-Ala)-di-trans,octa-cis-undecaprenyl diphosphate = [GlcNAc-(1-&gt;4)-Mur2Ac(oyl-L-Ala-gamma-D-Glu-L-Lys-D-Ala-D-Ala)](n+1)-di-trans,octa-cis-undecaprenyl diphosphate + di-trans,octa-cis-undecaprenyl diphosphate + H(+). The protein operates within cell wall biogenesis; peptidoglycan biosynthesis. In terms of biological role, peptidoglycan polymerase that catalyzes glycan chain elongation from lipid-linked precursors. The sequence is that of Biosynthetic peptidoglycan transglycosylase from Stutzerimonas stutzeri (strain A1501) (Pseudomonas stutzeri).